The primary structure comprises 263 residues: DNA repair protein RecO (263 aa).

The tract at residues 243-263 (DRKETARETVPTSDGTASNAV) is disordered. Residues 252–263 (VPTSDGTASNAV) are compositionally biased toward polar residues.

This sequence belongs to the RecO family.

Its function is as follows. Involved in DNA repair and RecF pathway recombination. The polypeptide is DNA repair protein RecO (Neisseria meningitidis serogroup C / serotype 2a (strain ATCC 700532 / DSM 15464 / FAM18)).